Reading from the N-terminus, the 479-residue chain is Ribosomal RNA small subunit methyltransferase F (479 aa).

S-adenosyl-L-methionine contacts are provided by residues 125 to 131, Glu149, Asp176, and Asp194; that span reads AAAPGSK. Cys247 functions as the Nucleophile in the catalytic mechanism.

The protein belongs to the class I-like SAM-binding methyltransferase superfamily. RsmB/NOP family.

It localises to the cytoplasm. It carries out the reaction cytidine(1407) in 16S rRNA + S-adenosyl-L-methionine = 5-methylcytidine(1407) in 16S rRNA + S-adenosyl-L-homocysteine + H(+). Its function is as follows. Specifically methylates the cytosine at position 1407 (m5C1407) of 16S rRNA. This is Ribosomal RNA small subunit methyltransferase F from Shigella boydii serotype 18 (strain CDC 3083-94 / BS512).